Here is a 394-residue protein sequence, read N- to C-terminus: Probable glycosyltransferase FCK3 (394 aa).

Belongs to the afumC glycosyltransferase family.

It functions in the pathway secondary metabolite biosynthesis. Its function is as follows. Probable glycosyl transferase; part of the gene cluster that mediates the biosynthesis of cytokinins such as fusatin, fusatinic acids or 8-oxofusatin, known for their growth promoting and anti-senescence activities toward host plants. FCK1 is a bifunctional enzyme that performs the first steps in the biosynthesis of Fusarium cytokinins. It first condenses adenosine monophosphate (AMP) with dimethylallyl diphosphate (DMAPP) to yield isoprenyl adenosine monophosphate. It then catalyzes the removal of the phosphoribose to produce isopentenylaldehyde. The cytochrome P450 monooxygenase then converts isopentenylaldehyde to trans-zeatin. A condensation step converts trans-zeatin to fusatin which is further modified to produce fusatinic acid. The mechanism for oxidation of fusatin to fusatinic acid remains unknown. 8-oxofusatin could be produced through several pathways, via direct oxygenation of fusatin, or via the 8-oxo-pentenyladenine intermediate which itself must arise from either the prenylation of 8-oxo-AMP by FCK1 and/or oxygenation of isopentenylaldehyde. Both the FCK3 and FCK4 enzymes act downstream of the identified cytokinins to produce yet unidentified compounds. In Fusarium pseudograminearum (strain CS3096) (Wheat and barley crown-rot fungus), this protein is Probable glycosyltransferase FCK3.